We begin with the raw amino-acid sequence, 291 residues long: ATP synthase gamma chain (291 aa).

Belongs to the ATPase gamma chain family. As to quaternary structure, F-type ATPases have 2 components, CF(1) - the catalytic core - and CF(0) - the membrane proton channel. CF(1) has five subunits: alpha(3), beta(3), gamma(1), delta(1), epsilon(1). CF(0) has three main subunits: a, b and c.

It localises to the cell inner membrane. In terms of biological role, produces ATP from ADP in the presence of a proton gradient across the membrane. The gamma chain is believed to be important in regulating ATPase activity and the flow of protons through the CF(0) complex. In Pelagibacter ubique (strain HTCC1062), this protein is ATP synthase gamma chain.